We begin with the raw amino-acid sequence, 315 residues long: Probable diguanylate cyclase DgcF (315 aa).

4 helical membrane-spanning segments follow: residues 10–30, 41–61, 80–100, and 116–136; these read FSTGVLIVPCMLTLAIPGVLP, IALIVSVIASVVIGGAGSLAF, LLTFVTGAVEIVLVANSVIDI, and LGIATMAICPIMVSFSVAAIN. A GGDEF domain is found at 173-310; that stretch reads QHLTVMLLDI…GRNRTSTMRY (138 aa). Mg(2+)-binding residues include Asp-181 and Ile-182. 3 residues coordinate substrate: Asn-189, His-194, and Asp-198. Glu-224 provides a ligand contact to Mg(2+).

Homodimer. It depends on Mg(2+) as a cofactor.

The protein resides in the cell membrane. It catalyses the reaction 2 GTP = 3',3'-c-di-GMP + 2 diphosphate. The protein operates within purine metabolism; 3',5'-cyclic di-GMP biosynthesis. Functionally, catalyzes the synthesis of cyclic-di-GMP (c-di-GMP) via the condensation of 2 GTP molecules. This is Probable diguanylate cyclase DgcF from Escherichia coli (strain K12).